Here is a 547-residue protein sequence, read N- to C-terminus: Solute carrier family 22 member 7 (547 aa).

A helical transmembrane segment spans residues 21-41 (VALLALPRVLLPMHFLLPIFL). The segment covering 91 to 103 (NSTLWGEGQNSGE) has biased composition (polar residues). Positions 91 to 112 (NSTLWGEGQNSGEQPEGEPSTV) are disordered. 11 consecutive transmembrane segments (helical) span residues 145–165 (AIST…GYLS), 179–199 (VSSL…MFAI), 203–223 (LTGM…LEWL), 233–253 (VLSS…GYLI), 258–278 (WLLL…WWVP), 345–365 (ISLC…GVSL), 367–387 (LSGL…VELP), 403–423 (LTMA…ILVS), 431–451 (TALA…AYLF), 465–485 (MGLT…AALL), and 492–512 (LPKL…LLLP). The segment at 521-547 (ETIQDVERKSAPSSLQEEEMPMKQVQD) is disordered.

This sequence belongs to the major facilitator (TC 2.A.1) superfamily. Organic cation transporter (TC 2.A.1.19) family.

It localises to the basolateral cell membrane. It is found in the apical cell membrane. The protein localises to the cell membrane. The catalysed reaction is orotate(out) + L-glutamate(in) = orotate(in) + L-glutamate(out). It carries out the reaction 3',5'-cyclic GMP(in) = 3',5'-cyclic GMP(out). The enzyme catalyses GMP(in) = GMP(out). It catalyses the reaction 2'-deoxyguanosine(in) = 2'-deoxyguanosine(out). The catalysed reaction is GDP(in) = GDP(out). It carries out the reaction guanosine(in) = guanosine(out). The enzyme catalyses GTP(in) = GTP(out). It catalyses the reaction 3',5'-cyclic AMP(in) = 3',5'-cyclic AMP(out). The catalysed reaction is creatinine(in) = creatinine(out). It carries out the reaction prostaglandin E2(out) = prostaglandin E2(in). The enzyme catalyses 2-oxoglutarate(in) = 2-oxoglutarate(out). It catalyses the reaction glutarate(in) = glutarate(out). The catalysed reaction is urate(out) = urate(in). It carries out the reaction estrone 3-sulfate(out) = estrone 3-sulfate(in). Its function is as follows. Functions as a Na(+)-independent bidirectional multispecific transporter. Contributes to the renal and hepatic elimination of endogenous organic compounds from the systemic circulation into the urine and bile, respectively. Capable of transporting a wide range of purine and pyrimidine nucleobases, nucleosides and nucleotides, with cGMP, 2'deoxyguanosine and GMP being the preferred substrates. Functions as a pH- and chloride-independent cGMP bidirectional facilitative transporter that can regulate both intracellular and extracellular levels of cGMP and may be involved in cGMP signaling pathways. Mediates orotate/glutamate bidirectional exchange and most likely display a physiological role in hepatic release of glutamate into the blood. Involved in renal secretion and possible reabsorption of creatinine. Able to uptake prostaglandin E2 (PGE2) and may contribute to PGE2 renal excretion. Also transports alpha-ketoglutarate and urate. Apart from the orotate/glutamate exchange, the counterions for the uptake of other SLC22A7/OAT2 substrates remain to be identified. This Bos taurus (Bovine) protein is Solute carrier family 22 member 7 (SLC22A7).